The chain runs to 118 residues: V-type proton ATPase subunit G 1 (118 aa).

Position 2 is an N-acetylalanine (A2). Residues 55 to 90 (FQSKQQAAMGSQGNLSAEVEQATRRQVQGMQSSQQR) are disordered. Composition is skewed to polar residues over residues 56–69 (QSKQQAAMGSQGNL) and 78–89 (RRQVQGMQSSQQ).

Belongs to the V-ATPase G subunit family. V-ATPase is a heteromultimeric enzyme made up of two complexes: the ATP-hydrolytic V1 complex and the proton translocation V0 complex. The V1 complex consists of three catalytic AB heterodimers that form a heterohexamer, three peripheral stalks each consisting of EG heterodimers, one central rotor including subunits D and F, and the regulatory subunits C and H. The proton translocation complex V0 consists of the proton transport subunit a, a ring of proteolipid subunits c9c'', rotary subunit d, subunits e and f, and the accessory subunits ATP6AP1/Ac45 and ATP6AP2/PRR.

Its subcellular location is the apical cell membrane. In terms of biological role, subunit of the V1 complex of vacuolar(H+)-ATPase (V-ATPase), a multisubunit enzyme composed of a peripheral complex (V1) that hydrolyzes ATP and a membrane integral complex (V0) that translocates protons. V-ATPase is responsible for acidifying and maintaining the pH of intracellular compartments and in some cell types, is targeted to the plasma membrane, where it is responsible for acidifying the extracellular environment. In aerobic conditions, involved in intracellular iron homeostasis, thus triggering the activity of Fe(2+) prolyl hydroxylase (PHD) enzymes, and leading to HIF1A hydroxylation and subsequent proteasomal degradation. This chain is V-type proton ATPase subunit G 1 (ATP6V1G1), found in Canis lupus familiaris (Dog).